The sequence spans 1183 residues: DNA-directed RNA polymerase subunit beta (1183 aa).

Positions 1151–1162 are enriched in acidic residues; that stretch reads EIEMADVDDEDA. The segment at 1151-1183 is disordered; sequence EIEMADVDDEDAAERKVDLQQKSAPESQKETTD.

This sequence belongs to the RNA polymerase beta chain family. As to quaternary structure, the RNAP catalytic core consists of 2 alpha, 1 beta, 1 beta' and 1 omega subunit. When a sigma factor is associated with the core the holoenzyme is formed, which can initiate transcription.

The catalysed reaction is RNA(n) + a ribonucleoside 5'-triphosphate = RNA(n+1) + diphosphate. Functionally, DNA-dependent RNA polymerase catalyzes the transcription of DNA into RNA using the four ribonucleoside triphosphates as substrates. The chain is DNA-directed RNA polymerase subunit beta from Staphylococcus epidermidis (strain ATCC 12228 / FDA PCI 1200).